A 291-amino-acid polypeptide reads, in one-letter code: Pirin (291 aa).

Positions 56, 58, 101, and 103 each coordinate Fe cation.

This sequence belongs to the pirin family. As to quaternary structure, may interact with NF1/CTF1. Interacts with BCL3. Identified in a complex comprised of PIR, BLC3, NFKB1 and target DNA. Fe cation serves as cofactor.

The protein resides in the nucleus. The protein localises to the cytoplasm. It carries out the reaction quercetin + O2 = 2-(3,4-dihydroxybenzoyloxy)-4,6-dihydroxybenzoate + CO. Its pathway is flavonoid metabolism; quercetin degradation. Its function is as follows. Transcriptional coregulator of NF-kappa-B which facilitates binding of NF-kappa-B proteins to target kappa-B genes in a redox-state-dependent manner. May be required for efficient terminal myeloid maturation of hematopoietic cells. Has quercetin 2,3-dioxygenase activity (in vitro). This is Pirin (Pir) from Rattus norvegicus (Rat).